The primary structure comprises 1355 residues: Ecdysone-induced protein 75B, isoform A (1355 aa).

4 disordered regions span residues 60–91, 126–228, 248–268, and 308–344; these read QHQP…QQHS, RLKN…DSSY, ELEQ…EAKP, and ATQQ…NSSA. Basic residues predominate over residues 66–76; the sequence is QLHHQHQHQHQ. Low complexity-rich tracts occupy residues 77-91 and 143-179; these read HQQQ…QQHS and TLVK…QHQQ. Residues 200–213 show a composition bias toward acidic residues; the sequence is SGIDEDSPNSDEDC. Composition is skewed to polar residues over residues 218-228 and 254-264; these read PAGTSLEDSSY and TTGGSNAQQQV. 2 stretches are compositionally biased toward low complexity: residues 308-321 and 330-344; these read ATQQ…QHQH and DSNC…NSSA. Positions 384-474 form a DNA-binding region, nuclear receptor; it reads SQLNYLCQKF…VGMSRDAVRF (91 aa). The segment at 387 to 421 adopts an NR C4-type; degenerate zinc-finger fold; that stretch reads NYLCQKFDEKLDTALSNSSANTGRNTPAVTANEDA. Residues 438–457 form an NR C4-type zinc finger; that stretch reads CTKNQQCSILRINRNRCQYC. The 249-residue stretch at 508 to 756 folds into the NR LBD domain; sequence DQPRLLAAVL…QQMWSMEDGN (249 aa). Disordered stretches follow at residues 780-821, 927-964, 987-1007, 1051-1117, 1147-1260, and 1312-1344; these read KSPL…SALA, LDSP…SVDD, VSVS…KRQI, AEAD…SSHS, ENST…SNSA, and TVTA…NPGL. Composition is skewed to low complexity over residues 797 to 809, 948 to 960, 987 to 1001, 1053 to 1098, and 1106 to 1117; these read GSPS…GVSL, SSGG…SPRS, VSVS…STSS, ADAS…AQSQ, and SSPKASMASSHS. Polar residues-rich tracts occupy residues 1149–1162 and 1174–1196; these read STAA…VGNR and AVQN…QRQQ. Composition is skewed to low complexity over residues 1197–1233, 1242–1260, and 1315–1343; these read SVSP…SASS, STSN…SNSA, and ASNG…PNPG.

This sequence belongs to the nuclear hormone receptor family. NR1 subfamily.

It localises to the nucleus. Implicated in the regulation of ecdysone-triggered gene hierarchies. Probably plays a key role in mediating the regulation of the larval molt by 20-OH-ecdysone. The polypeptide is Ecdysone-induced protein 75B, isoform A (Eip75B) (Drosophila melanogaster (Fruit fly)).